A 204-amino-acid chain; its full sequence is Protein FAM167A (204 aa).

A disordered region spans residues 58–80 (GLAVSDGSTELEKDAGLKPRATP). Residues 113–146 (LRKELMEMRIQDQQLARQLMRLRGDINKLKVEQT) adopt a coiled-coil conformation.

Belongs to the FAM167 (SEC) family.

The protein is Protein FAM167A (fam167a) of Danio rerio (Zebrafish).